The primary structure comprises 460 residues: Glycine--tRNA ligase (460 aa).

Residues arginine 99 and glutamate 162 each contribute to the substrate site. Residues 194-196, 204-209, 281-282, and 325-328 contribute to the ATP site; these read RNE, FRTREF, EL, and GVGR. Substrate is bound at residue 209-213; it reads FEQME. A substrate-binding site is contributed by 321-325; it reads EPAAG.

It belongs to the class-II aminoacyl-tRNA synthetase family. In terms of assembly, homodimer.

The protein resides in the cytoplasm. The catalysed reaction is tRNA(Gly) + glycine + ATP = glycyl-tRNA(Gly) + AMP + diphosphate. Its function is as follows. Catalyzes the attachment of glycine to tRNA(Gly). The chain is Glycine--tRNA ligase from Streptomyces coelicolor (strain ATCC BAA-471 / A3(2) / M145).